A 200-amino-acid chain; its full sequence is MTSANIQMAVYCFDVINAQLNREKEPPVPKEIPNVKLPLFVTWKKGHQHDLRGCIGTFSDLRLGEGLNEYAKTSAFHDSRFKPISREEVPSLQCGVSLLINFEPIHNFRDWTIGRHGVRMNFDDGHRNRSAVFLPEVAQEQGWNHVETIDHLIRKSGYGGHINDALRSALRIVRFQSSKLVLDYKDYVNYKQSHGLPLPR.

An AMMECR1 domain is found at 1–191; the sequence is MTSANIQMAV…LDYKDYVNYK (191 aa).

This is an uncharacterized protein from Caenorhabditis elegans.